A 62-amino-acid chain; its full sequence is Large ribosomal subunit protein uL29 (62 aa).

This sequence belongs to the universal ribosomal protein uL29 family.

This chain is Large ribosomal subunit protein uL29, found in Amoebophilus asiaticus (strain 5a2).